The following is a 379-amino-acid chain: Eukaryotic translation initiation factor 3 subunit H (379 aa).

The MPN domain occupies 17 to 170 (VQIDSLVVMK…IRAYRLSTKA (154 aa)). Positions 280-291 (RQAENEQREARG) are enriched in basic and acidic residues. Residues 280–300 (RQAENEQREARGEPPLSFDDI) are disordered.

The protein belongs to the eIF-3 subunit H family. As to quaternary structure, component of the eukaryotic translation initiation factor 3 (eIF-3) complex.

It localises to the cytoplasm. Component of the eukaryotic translation initiation factor 3 (eIF-3) complex, which is involved in protein synthesis of a specialized repertoire of mRNAs and, together with other initiation factors, stimulates binding of mRNA and methionyl-tRNAi to the 40S ribosome. The eIF-3 complex specifically targets and initiates translation of a subset of mRNAs involved in cell proliferation. The protein is Eukaryotic translation initiation factor 3 subunit H of Brugia malayi (Filarial nematode worm).